A 368-amino-acid polypeptide reads, in one-letter code: Phenylalanine--tRNA ligase alpha subunit (368 aa).

Glutamate 268 provides a ligand contact to Mg(2+).

Belongs to the class-II aminoacyl-tRNA synthetase family. Phe-tRNA synthetase alpha subunit type 1 subfamily. In terms of assembly, tetramer of two alpha and two beta subunits. Mg(2+) serves as cofactor.

Its subcellular location is the cytoplasm. It carries out the reaction tRNA(Phe) + L-phenylalanine + ATP = L-phenylalanyl-tRNA(Phe) + AMP + diphosphate + H(+). This chain is Phenylalanine--tRNA ligase alpha subunit, found in Nitrobacter hamburgensis (strain DSM 10229 / NCIMB 13809 / X14).